The following is a 339-amino-acid chain: Phenylalanine--tRNA ligase alpha subunit (339 aa).

E254 provides a ligand contact to Mg(2+).

This sequence belongs to the class-II aminoacyl-tRNA synthetase family. Phe-tRNA synthetase alpha subunit type 1 subfamily. As to quaternary structure, tetramer of two alpha and two beta subunits. Mg(2+) is required as a cofactor.

It localises to the cytoplasm. The enzyme catalyses tRNA(Phe) + L-phenylalanine + ATP = L-phenylalanyl-tRNA(Phe) + AMP + diphosphate + H(+). In Clostridium acetobutylicum (strain ATCC 824 / DSM 792 / JCM 1419 / IAM 19013 / LMG 5710 / NBRC 13948 / NRRL B-527 / VKM B-1787 / 2291 / W), this protein is Phenylalanine--tRNA ligase alpha subunit.